The sequence spans 352 residues: Protein MGF 360-9L (352 aa).

This sequence belongs to the asfivirus MGF 360 family. As to quaternary structure, interacts with host STAT1; this interaction mediates STAT1 degradation through apoptosis. Interacts with host STAT2; this interaction mediates STAT2 degradation through the proteasome.

Its subcellular location is the host cytoplasm. Its function is as follows. Plays a role in virus cell tropism, and may be required for efficient virus replication in macrophages. The chain is Protein MGF 360-9L from Ornithodoros (relapsing fever ticks).